A 272-amino-acid polypeptide reads, in one-letter code: Putative hydro-lyase RPD_1846 (272 aa).

It belongs to the D-glutamate cyclase family.

In Rhodopseudomonas palustris (strain BisB5), this protein is Putative hydro-lyase RPD_1846.